Reading from the N-terminus, the 112-residue chain is Nucleoid-associated protein CV_1611 (112 aa).

It belongs to the YbaB/EbfC family. Homodimer.

The protein resides in the cytoplasm. The protein localises to the nucleoid. Binds to DNA and alters its conformation. May be involved in regulation of gene expression, nucleoid organization and DNA protection. This chain is Nucleoid-associated protein CV_1611, found in Chromobacterium violaceum (strain ATCC 12472 / DSM 30191 / JCM 1249 / CCUG 213 / NBRC 12614 / NCIMB 9131 / NCTC 9757 / MK).